A 218-amino-acid polypeptide reads, in one-letter code: MANALGFRDLGLIDYETAWHAMQRFTDGRGREAGDEVWLVQHPPVFTQGQSGKAEHLLLPGNIPVVQVDRGGQVTYHGPGQLVAYLMLDVRRLGFGVRDLVTRIENTLIALLADYGVTAAAKADAPGVYVDGAKIASLGLRIRNGCSFHGLALNVDMDLEPFRRINPCGYAGLAMTQLSDQAGQIEFSEVSVRLRAQLVKHLDYAEQATLTGGINQYD.

One can recognise a BPL/LPL catalytic domain in the interval 31–206; sequence REAGDEVWLV…QLVKHLDYAE (176 aa). Residues 70–77, 137–139, and 150–152 contribute to the substrate site; these read RGGQVTYH, SLG, and GLA. Cys168 serves as the catalytic Acyl-thioester intermediate.

The protein belongs to the LipB family.

The protein localises to the cytoplasm. The catalysed reaction is octanoyl-[ACP] + L-lysyl-[protein] = N(6)-octanoyl-L-lysyl-[protein] + holo-[ACP] + H(+). Its pathway is protein modification; protein lipoylation via endogenous pathway; protein N(6)-(lipoyl)lysine from octanoyl-[acyl-carrier-protein]: step 1/2. In terms of biological role, catalyzes the transfer of endogenously produced octanoic acid from octanoyl-acyl-carrier-protein onto the lipoyl domains of lipoate-dependent enzymes. Lipoyl-ACP can also act as a substrate although octanoyl-ACP is likely to be the physiological substrate. This is Octanoyltransferase from Pseudomonas syringae pv. tomato (strain ATCC BAA-871 / DC3000).